The following is an 808-amino-acid chain: Transducin beta-like protein 3 (808 aa).

Residue Ala2 is modified to N-acetylalanine. WD repeat units follow at residues 64 to 105 (EDQE…RLWK), 107 to 146 (IHTA…GTHH), 149 to 190 (GSPG…CLAV), 193 to 232 (AHYS…ATRT), 245 to 284 (LPEE…CVYT), 290 to 329 (GPGQ…LQKQ), 332 to 372 (GYSE…CQIL), 374 to 413 (GHTD…QVMC), 419 to 459 (GHTH…LSKN), 477 to 516 (CHDK…LLGV), 519 to 560 (GHRR…KTFE), 562 to 602 (HDAS…RTLD), and 604 to 642 (HEDK…EQAE). Phosphoserine is present on Ser257. Lys407 is covalently cross-linked (Glycyl lysine isopeptide (Lys-Gly) (interchain with G-Cter in SUMO2)).

Part of the small subunit (SSU) processome, composed of more than 70 proteins and the RNA chaperone small nucleolar RNA (snoRNA) U3.

Its subcellular location is the nucleus. The protein localises to the nucleolus. Part of the small subunit (SSU) processome, first precursor of the small eukaryotic ribosomal subunit. During the assembly of the SSU processome in the nucleolus, many ribosome biogenesis factors, an RNA chaperone and ribosomal proteins associate with the nascent pre-rRNA and work in concert to generate RNA folding, modifications, rearrangements and cleavage as well as targeted degradation of pre-ribosomal RNA by the RNA exosome. This chain is Transducin beta-like protein 3, found in Homo sapiens (Human).